The chain runs to 208 residues: Uracil phosphoribosyltransferase (208 aa).

5-phospho-alpha-D-ribose 1-diphosphate contacts are provided by residues Arg-78, Arg-103, and 130-138 (DPMLATGGS). Uracil-binding positions include Ile-193 and 198–200 (GDA). Asp-199 contacts 5-phospho-alpha-D-ribose 1-diphosphate.

Belongs to the UPRTase family. Mg(2+) serves as cofactor.

The enzyme catalyses UMP + diphosphate = 5-phospho-alpha-D-ribose 1-diphosphate + uracil. Its pathway is pyrimidine metabolism; UMP biosynthesis via salvage pathway; UMP from uracil: step 1/1. Its activity is regulated as follows. Allosterically activated by GTP. Functionally, catalyzes the conversion of uracil and 5-phospho-alpha-D-ribose 1-diphosphate (PRPP) to UMP and diphosphate. In Haemophilus ducreyi (strain 35000HP / ATCC 700724), this protein is Uracil phosphoribosyltransferase.